The primary structure comprises 122 residues: Large ribosomal subunit protein bL19c (122 aa).

This sequence belongs to the bacterial ribosomal protein bL19 family.

The protein resides in the plastid. The protein localises to the chloroplast. This chain is Large ribosomal subunit protein bL19c (rpl19), found in Rhodomonas salina (Cryptomonas salina).